The sequence spans 461 residues: Zinc transporter 6 (461 aa).

Topologically, residues 1-33 (MGTIHLFRKPQRSFFGKLLQEFRLVAADRRSWK) are cytoplasmic. The chain crosses the membrane as a helical span at residues 34–54 (ILLFGAINLTCTGFLLMWCSS). At 55-64 (TNSIALTAYT) the chain is on the extracellular side. Residues 65–85 (YLTIFDLFSLITCLVSYWVMM) traverse the membrane as a helical segment. Over 86–98 (RKPSPAYSFGFER) the chain is Cytoplasmic. Residues 99–119 (LEVLAVFASTVLAQLGALFIL) traverse the membrane as a helical segment. The Extracellular segment spans residues 120–134 (KESAERFLEQPEIHT). The chain crosses the membrane as a helical span at residues 135–155 (GRLLVGTFVALSFNLFTMLSI). Over 156-200 (RNKPFAYVSEAASTSWLQEHVADLSRSLCGIIPGLSSIFLPRMNP) the chain is Cytoplasmic. The chain crosses the membrane as a helical span at residues 201–221 (FVLIDLAGAFALCITYMLIEI). Topologically, residues 222–223 (NN) are extracellular. A helical transmembrane segment spans residues 224-244 (YFAVDTASAIAIALMTFGTMY). At 245-461 (PMSVYSGKVL…TNNRIGQPRP (217 aa)) the chain is on the cytoplasmic side. The interval 362-393 (PPLKGTDDSNPVTSTPTKPSSPPPEFSFNTPG) is disordered. The span at 370–379 (SNPVTSTPTK) shows a compositional bias: low complexity.

This sequence belongs to the cation diffusion facilitator (CDF) transporter (TC 2.A.4) family. SLC30A subfamily. As to quaternary structure, heterodimer with SLC30A5; form a functional zinc ion transmembrane transporter.

It is found in the golgi apparatus. The protein resides in the trans-Golgi network membrane. Functionally, has probably no intrinsic transporter activity but together with SLC30A5 forms a functional zinc ion:proton antiporter heterodimer, mediating zinc entry into the lumen of organelles along the secretory pathway. As part of that zinc ion:proton antiporter, contributes to zinc ion homeostasis within the early secretory pathway and regulates the activation and folding of enzymes like alkaline phosphatases and enzymes involved in phosphatidylinositol glycan anchor biosynthesis. The chain is Zinc transporter 6 (SLC30A6) from Bos taurus (Bovine).